A 364-amino-acid chain; its full sequence is tRNA/tmRNA (uracil-C(5))-methyltransferase (364 aa).

S-adenosyl-L-methionine contacts are provided by glutamine 186, tyrosine 214, asparagine 219, glutamate 235, and aspartate 295. Cysteine 320 acts as the Nucleophile in catalysis. The active-site Proton acceptor is glutamate 354.

Belongs to the class I-like SAM-binding methyltransferase superfamily. RNA M5U methyltransferase family. TrmA subfamily.

The catalysed reaction is uridine(54) in tRNA + S-adenosyl-L-methionine = 5-methyluridine(54) in tRNA + S-adenosyl-L-homocysteine + H(+). It catalyses the reaction uridine(341) in tmRNA + S-adenosyl-L-methionine = 5-methyluridine(341) in tmRNA + S-adenosyl-L-homocysteine + H(+). Its function is as follows. Dual-specificity methyltransferase that catalyzes the formation of 5-methyluridine at position 54 (m5U54) in all tRNAs, and that of position 341 (m5U341) in tmRNA (transfer-mRNA). The chain is tRNA/tmRNA (uracil-C(5))-methyltransferase from Azoarcus sp. (strain BH72).